The primary structure comprises 215 residues: 3-isopropylmalate dehydratase small subunit (215 aa).

This sequence belongs to the LeuD family. LeuD type 1 subfamily. In terms of assembly, heterodimer of LeuC and LeuD.

The enzyme catalyses (2R,3S)-3-isopropylmalate = (2S)-2-isopropylmalate. It functions in the pathway amino-acid biosynthesis; L-leucine biosynthesis; L-leucine from 3-methyl-2-oxobutanoate: step 2/4. Functionally, catalyzes the isomerization between 2-isopropylmalate and 3-isopropylmalate, via the formation of 2-isopropylmaleate. The protein is 3-isopropylmalate dehydratase small subunit of Xylella fastidiosa (strain 9a5c).